The sequence spans 268 residues: Phosphatidylglycerol--prolipoprotein diacylglyceryl transferase (268 aa).

The next 7 helical transmembrane spans lie at 27 to 47, 66 to 86, 104 to 124, 130 to 150, 181 to 201, 208 to 228, and 242 to 262; these read PALR…MWLL, LLFY…VLFY, GGMS…YIAW, FFAV…AGRI, PSQL…LYWF, VGAV…IVET, and FMTM…YLIL. Arg149 contacts a 1,2-diacyl-sn-glycero-3-phospho-(1'-sn-glycerol).

The protein belongs to the Lgt family.

It localises to the cell inner membrane. It catalyses the reaction L-cysteinyl-[prolipoprotein] + a 1,2-diacyl-sn-glycero-3-phospho-(1'-sn-glycerol) = an S-1,2-diacyl-sn-glyceryl-L-cysteinyl-[prolipoprotein] + sn-glycerol 1-phosphate + H(+). It participates in protein modification; lipoprotein biosynthesis (diacylglyceryl transfer). Catalyzes the transfer of the diacylglyceryl group from phosphatidylglycerol to the sulfhydryl group of the N-terminal cysteine of a prolipoprotein, the first step in the formation of mature lipoproteins. This Shewanella sp. (strain ANA-3) protein is Phosphatidylglycerol--prolipoprotein diacylglyceryl transferase.